Reading from the N-terminus, the 204-residue chain is Dephospho-CoA kinase (204 aa).

A DPCK domain is found at 5-204; that stretch reads VVGLTGGIGS…YLANLVKAML (200 aa). An ATP-binding site is contributed by 13-18; that stretch reads GSGKSA.

It belongs to the CoaE family.

The protein resides in the cytoplasm. The catalysed reaction is 3'-dephospho-CoA + ATP = ADP + CoA + H(+). Its pathway is cofactor biosynthesis; coenzyme A biosynthesis; CoA from (R)-pantothenate: step 5/5. Functionally, catalyzes the phosphorylation of the 3'-hydroxyl group of dephosphocoenzyme A to form coenzyme A. This Chromobacterium violaceum (strain ATCC 12472 / DSM 30191 / JCM 1249 / CCUG 213 / NBRC 12614 / NCIMB 9131 / NCTC 9757 / MK) protein is Dephospho-CoA kinase.